A 238-amino-acid polypeptide reads, in one-letter code: MSDVTTAEFNEEGKYLRKIRSFVLREGRLTKGQAQAIEAHWPTMGLDYTPEAIDLVKIFGREADTVLEIGFGMGGSLVEMAAAAPELNYIGIEVHKPGVGACLGVAGEAKVTNLRVYHHDAMEVLEHSIADGSLSRVQLFFPDPWHKKRHHKRRIVQAEFAELIRRKLKLGGVFHMATDWENYSEHMLEVMNLAPGYKNQSPTGTVVERPDHRPLTKFEARGHRLGHGVWDIMFERIS.

Glu-68, Glu-93, Asp-120, and Asp-143 together coordinate S-adenosyl-L-methionine. The active site involves Asp-143. Substrate-binding positions include Lys-147, Asp-179, and Thr-216–Glu-219.

Belongs to the class I-like SAM-binding methyltransferase superfamily. TrmB family.

It catalyses the reaction guanosine(46) in tRNA + S-adenosyl-L-methionine = N(7)-methylguanosine(46) in tRNA + S-adenosyl-L-homocysteine. It participates in tRNA modification; N(7)-methylguanine-tRNA biosynthesis. In terms of biological role, catalyzes the formation of N(7)-methylguanine at position 46 (m7G46) in tRNA. This is tRNA (guanine-N(7)-)-methyltransferase from Shewanella denitrificans (strain OS217 / ATCC BAA-1090 / DSM 15013).